Reading from the N-terminus, the 106-residue chain is Nucleoid-associated protein PD_1058 (106 aa).

Belongs to the YbaB/EbfC family. As to quaternary structure, homodimer.

The protein resides in the cytoplasm. It localises to the nucleoid. Functionally, binds to DNA and alters its conformation. May be involved in regulation of gene expression, nucleoid organization and DNA protection. This is Nucleoid-associated protein PD_1058 from Xylella fastidiosa (strain Temecula1 / ATCC 700964).